The primary structure comprises 471 residues: MAGGVTGGAAGAWSDRFEQGLHPFVEAFNASIGFDLTLLQEDLDGSIAHARMLASCGVIAEEEAVQLVDGLELIRTEAADGRFNPGLEDEDVHFAVERRLIALVGSVGKKLHTGRSRNDQVGTDLRLWLRRRLDEIDGDLQRLQRALLDQADRHQSTMIPGYTHLQRAQPLCLAHHLLAYIEMLQRDRQRLGDVRGRVNICPLGAAALAGTPVPIDRRRTAEDLGFTAIYANSLDAVSDRDFCVEFSAAASLVMAHLSRLAEEVIAWASEEFGFVRLSDRCATGSSLMPQKKNPDVPELVRGKCGRVFGHLQGLLTMIKGLPLAYNKDFQEDKEALFDAYRTTRDCVEAMAILFEEGLEFRIDRLNQAVESDFSNATDVADYLVARGVPFREAYQLVGAVVRRCLEQDCLLRELSLEQWKEIHPAFEADLHEALAPRAVVSARRSEGGTGFDRVHEQVMLWQERLKESAVG.

This sequence belongs to the lyase 1 family. Argininosuccinate lyase subfamily.

Its subcellular location is the cytoplasm. It catalyses the reaction 2-(N(omega)-L-arginino)succinate = fumarate + L-arginine. Its pathway is amino-acid biosynthesis; L-arginine biosynthesis; L-arginine from L-ornithine and carbamoyl phosphate: step 3/3. The sequence is that of Argininosuccinate lyase from Parasynechococcus marenigrum (strain WH8102).